The chain runs to 127 residues: Small ribosomal subunit protein uS12 (127 aa).

D89 is subject to 3-methylthioaspartic acid. Positions 104–127 are disordered; that stretch reads TQGVKDRKQARSKYGTKRAKAGKK. Basic residues predominate over residues 113 to 127; the sequence is ARSKYGTKRAKAGKK.

Belongs to the universal ribosomal protein uS12 family. In terms of assembly, part of the 30S ribosomal subunit. Contacts proteins S8 and S17. May interact with IF1 in the 30S initiation complex.

Its function is as follows. With S4 and S5 plays an important role in translational accuracy. Interacts with and stabilizes bases of the 16S rRNA that are involved in tRNA selection in the A site and with the mRNA backbone. Located at the interface of the 30S and 50S subunits, it traverses the body of the 30S subunit contacting proteins on the other side and probably holding the rRNA structure together. The combined cluster of proteins S8, S12 and S17 appears to hold together the shoulder and platform of the 30S subunit. This chain is Small ribosomal subunit protein uS12, found in Herminiimonas arsenicoxydans.